The primary structure comprises 535 residues: Proto-oncogene tyrosine-protein kinase Src (535 aa).

Positions 1 to 56 (MGSNKSKPKDASQRRRSLEPSENVHGAGGAFPASQTPSKPASADGHRGPSAAFVPP) are disordered. Gly-2 carries N-myristoyl glycine lipidation. Positions 7 to 19 (KPKDASQRRRSLE) are enriched in basic and acidic residues. A phosphoserine mark is found at Ser-17, Ser-21, and Ser-74. One can recognise an SH3 domain in the interval 83–144 (GGVTTFVALY…PSNYVAPSDS (62 aa)). In terms of domain architecture, SH2 spans 150-247 (WYFGKITRRE…GLCHRLTTVC (98 aa)). Tyr-186 carries the post-translational modification Phosphotyrosine. One can recognise a Protein kinase domain in the interval 269 to 522 (LRLEVKLGQG…YLQAFLEDYF (254 aa)). ATP is bound by residues 275–283 (LGQGCFGEV) and Lys-297. Catalysis depends on Asp-388, which acts as the Proton acceptor. Position 418 is a phosphotyrosine; by autocatalysis (Tyr-418). Tyr-418 is modified (phosphotyrosine; by FAK2). The residue at position 529 (Tyr-529) is a Phosphotyrosine; by CSK.

This sequence belongs to the protein kinase superfamily. Tyr protein kinase family. SRC subfamily. Part of a complex comprised of PTPRA, BCAR1, BCAR3 (via SH2 domain) and SRC; the formation of the complex is dependent on integrin mediated-tyrosine phosphorylation of PTPRA. Interacts with CDCP1, TGFB1I1 and TOM1L2. Interacts with DDEF1/ASAP1 via its SH3 domain. Interacts with CCPG1. Interacts with the cytoplasmic domain of MUC1, phosphorylates it and increases binding of MUC1 with beta-catenin. Interacts with RALGPS1 via its SH3 domain. Interacts with CAV2 (tyrosine phosphorylated form). Interacts (via the SH3 domain and the protein kinase domain) with ARRB1; the interaction is independent of the phosphorylation state of SRC C-terminus. Interacts with FCAMR and PXN. Interacts with ARRB2. Interacts with ARRB1. Interacts with SRCIN1. Interacts with NDFIP2 and more weakly with NDFIP1. Interacts with PIK3CA and/or PIK3C2B, PTK2/FAK1, ESR1 (dimethylated on arginine) and FAK. Interacts (via SH2 and SH3 domain) with TNK2. Interacts (via protein kinase domain) with the tyrosine phosphorylated form of RUNX3 (via runt domain). Interacts with TRAF3 (via RING-type zinc finger domain). Interacts with RIGI, MAVS and TBK1. Interacts (via SH2 domain) with RACK1; the interaction is enhanced by tyrosine phosphorylation of RACK1 and inhibits SRC activity. Interacts (via SH2 domain) with the 'Tyr-402' phosphorylated form of PTK2B/PYK2. Interacts (via SH2 domain) with FLT3 (tyrosine phosphorylated). Identified in a complex containing FGFR4, NCAM1, CDH2, PLCG1, FRS2, SRC, SHC1, GAP43 and CTTN. Interacts with EPHB1; activates the MAPK/ERK cascade to regulate cell migration. Interacts with ERBB2 and STAT1. Interacts with PDGFRA (tyrosine phosphorylated). Interacts with CSF1R. Interacts (via SH2 domain) with the 'Tyr-9' phosphorylated form of PDPK1. Interacts with DDR2. Interacts with AMOTL2; this interaction regulates the translocation of phosphorylated SRC to peripheral cell-matrix adhesion sites. Interacts with DDR1 and DAB2. Interacts with TRAP1. Interacts with CBLC; the interaction is enhanced when SRC is phosphorylated at 'Tyr-424'. Interacts with ARHGEF5. Interacts (via cytoplasmic domain) with CEACAM1 (via SH2 domain); this interaction is regulated by trans-homophilic cell adhesion. Interacts with MPP2. Interacts with PRR7. Interacts (via kinase domain and to a lesser extent the SH2 domain) directly with PDLIM4; this interaction results in PTPN13-mediated dephosphorylation of this protein leading to its inactivation. Interacts with P85 (PIK3R1 or PIK3R2). Interacts with HNRNPA2B1. Interacts with IL6ST/gp130. Interacts (via SH3 domain) with PELP1 in the presence of 17-beta-estradiol. Interacts with AMBRA1. In terms of processing, myristoylated at Gly-2, and this is essential for targeting to membranes. Post-translationally, dephosphorylated at Tyr-529 by PTPRJ. Phosphorylated on Tyr-529 by c-Src kinase (CSK). The phosphorylated form is termed pp60c-src. Dephosphorylated by PTPRJ at Tyr-418. Normally maintained in an inactive conformation with the SH2 domain engaged with Tyr-529, the SH3 domain engaged with the SH2-kinase linker, and Tyr-418 dephosphorylated. Dephosphorylation of Tyr-529 as a result of protein tyrosine phosphatase (PTP) action disrupts the intramolecular interaction between the SH2 domain and Tyr-529, Tyr-418 can then become autophosphorylated, resulting in SRC activation. Phosphorylation of Tyr-529 by CSK allows this interaction to reform, resulting in SRC inactivation. CDK5-mediated phosphorylation at Ser-74 targets SRC to ubiquitin-dependent degradation and thus leads to cytoskeletal reorganization. Phosphorylated by PTK2/FAK1; this enhances kinase activity. Phosphorylated by PTK2B/PYK2; this enhances kinase activity. Upon activation of IL6ST by IL6, Tyr-418 is phosphorylated and Tyr-529 dephosphorylated. Displays reduced levels of autophosphorylation at Tyr-418 compared to isoform 2. In terms of processing, displays enhanced levels of autophosphorylation at Tyr-418 compared to isoform 1. Post-translationally, S-nitrosylation is important for activation of its kinase activity. Ubiquitinated in response to CDK5-mediated phosphorylation. Ubiquitination mediated by CBLC requires SRC autophosphorylation at Tyr-418 and may lead to lysosomal degradation.

The protein localises to the cell membrane. It is found in the mitochondrion inner membrane. Its subcellular location is the nucleus. The protein resides in the cytoplasm. It localises to the cytoskeleton. The protein localises to the perinuclear region. It is found in the cell junction. Its subcellular location is the focal adhesion. The catalysed reaction is L-tyrosyl-[protein] + ATP = O-phospho-L-tyrosyl-[protein] + ADP + H(+). Phosphorylation by CSK at Tyr-529 inhibits kinase activity. Inhibitory phosphorylation at Tyr-529 is enhanced by heme. Further phosphorylation by CDK1 partially reactivates CSK-inactivated SRC and facilitates complete reactivation by protein tyrosine phosphatase PTPRC. Integrin engagement stimulates kinase activity. Phosphorylation by PTK2/FAK1 enhances kinase activity. Butein and pseudosubstrate-based peptide inhibitors like CIYKYYF act as inhibitors. Phosphorylation at Tyr-418 increases kinase activity. Non-receptor protein tyrosine kinase which is activated following engagement of many different classes of cellular receptors including immune response receptors, integrins and other adhesion receptors, receptor protein tyrosine kinases, G protein-coupled receptors as well as cytokine receptors. Participates in signaling pathways that control a diverse spectrum of biological activities including gene transcription, immune response, cell adhesion, cell cycle progression, apoptosis, migration, and transformation. Due to functional redundancy between members of the SRC kinase family, identification of the specific role of each SRC kinase is very difficult. SRC appears to be one of the primary kinases activated following engagement of receptors and plays a role in the activation of other protein tyrosine kinase (PTK) families. Receptor clustering or dimerization leads to recruitment of SRC to the receptor complexes where it phosphorylates the tyrosine residues within the receptor cytoplasmic domains. Plays an important role in the regulation of cytoskeletal organization through phosphorylation of specific substrates such as AFAP1. Phosphorylation of AFAP1 allows the SRC SH2 domain to bind AFAP1 and to localize to actin filaments. Cytoskeletal reorganization is also controlled through the phosphorylation of cortactin (CTTN). When cells adhere via focal adhesions to the extracellular matrix, signals are transmitted by integrins into the cell resulting in tyrosine phosphorylation of a number of focal adhesion proteins, including PTK2/FAK1 and paxillin (PXN). In addition to phosphorylating focal adhesion proteins, SRC is also active at the sites of cell-cell contact adherens junctions and phosphorylates substrates such as beta-catenin (CTNNB1), delta-catenin (CTNND1), and plakoglobin (JUP). Another type of cell-cell junction, the gap junction, is also a target for SRC, which phosphorylates connexin-43 (GJA1). SRC is implicated in regulation of pre-mRNA-processing and phosphorylates RNA-binding proteins such as KHDRBS1. Phosphorylates PKP3 at 'Tyr-195' in response to reactive oxygen species, which may cause the release of PKP3 from desmosome cell junctions into the cytoplasm. Also plays a role in PDGF-mediated tyrosine phosphorylation of both STAT1 and STAT3, leading to increased DNA binding activity of these transcription factors. Involved in the RAS pathway through phosphorylation of RASA1 and RASGRF1. Plays a role in EGF-mediated calcium-activated chloride channel activation. Required for epidermal growth factor receptor (EGFR) internalization through phosphorylation of clathrin heavy chain (CLTC and CLTCL1) at 'Tyr-1477'. Involved in beta-arrestin (ARRB1 and ARRB2) desensitization through phosphorylation and activation of GRK2, leading to beta-arrestin phosphorylation and internalization. Has a critical role in the stimulation of the CDK20/MAPK3 mitogen-activated protein kinase cascade by epidermal growth factor. Might be involved not only in mediating the transduction of mitogenic signals at the level of the plasma membrane but also in controlling progression through the cell cycle via interaction with regulatory proteins in the nucleus. Plays an important role in osteoclastic bone resorption in conjunction with PTK2B/PYK2. Both the formation of a SRC-PTK2B/PYK2 complex and SRC kinase activity are necessary for this function. Recruited to activated integrins by PTK2B/PYK2, thereby phosphorylating CBL, which in turn induces the activation and recruitment of phosphatidylinositol 3-kinase to the cell membrane in a signaling pathway that is critical for osteoclast function. Promotes energy production in osteoclasts by activating mitochondrial cytochrome C oxidase. Phosphorylates DDR2 on tyrosine residues, thereby promoting its subsequent autophosphorylation. Phosphorylates RUNX3 and COX2 on tyrosine residues, TNK2 on 'Tyr-284' and CBL on 'Tyr-738'. Enhances RIGI-elicited antiviral signaling. Phosphorylates PDPK1 at 'Tyr-9', 'Tyr-373' and 'Tyr-376'. Phosphorylates BCAR1 at 'Tyr-226'. Phosphorylates CBLC at multiple tyrosine residues, phosphorylation at 'Tyr-341' activates CBLC E3 activity. Phosphorylates synaptic vesicle protein synaptophysin (SYP). Involved in anchorage-independent cell growth. Required for podosome formation. Mediates IL6 signaling by activating YAP1-NOTCH pathway to induce inflammation-induced epithelial regeneration. Phosphorylates OTUB1, promoting deubiquitination of RPTOR. Its function is as follows. Non-receptor protein tyrosine kinase which phosphorylates synaptophysin with high affinity. In terms of biological role, non-receptor protein tyrosine kinase which shows higher basal kinase activity than isoform 1, possibly due to weakened intramolecular interactions which enhance autophosphorylation of Tyr-418 and subsequent activation. The SH3 domain shows reduced affinity with the linker sequence between the SH2 and kinase domains which may account for the increased basal activity. Displays altered substrate specificity compared to isoform 1, showing weak affinity for synaptophysin and for peptide substrates containing class I or class II SH3 domain-binding motifs. Plays a role in L1CAM-mediated neurite elongation, possibly by acting downstream of L1CAM to drive cytoskeletal rearrangements involved in neurite outgrowth. The polypeptide is Proto-oncogene tyrosine-protein kinase Src (Mus musculus (Mouse)).